Reading from the N-terminus, the 371-residue chain is Glutamate 5-kinase (371 aa).

An ATP-binding site is contributed by K10. Substrate is bound by residues S50, D137, and N149. Residues 169-170 (SD) and 208-214 (TGGMYTK) each bind ATP. One can recognise a PUA domain in the interval 274 to 352 (QGKVYIDDGA…EEIKNILGED (79 aa)).

This sequence belongs to the glutamate 5-kinase family.

It is found in the cytoplasm. It catalyses the reaction L-glutamate + ATP = L-glutamyl 5-phosphate + ADP. It functions in the pathway amino-acid biosynthesis; L-proline biosynthesis; L-glutamate 5-semialdehyde from L-glutamate: step 1/2. Functionally, catalyzes the transfer of a phosphate group to glutamate to form L-glutamate 5-phosphate. The sequence is that of Glutamate 5-kinase from Dictyoglomus thermophilum (strain ATCC 35947 / DSM 3960 / H-6-12).